We begin with the raw amino-acid sequence, 189 residues long: Adenine phosphoribosyltransferase (189 aa).

This sequence belongs to the purine/pyrimidine phosphoribosyltransferase family. In terms of assembly, homodimer.

The protein resides in the cytoplasm. It carries out the reaction AMP + diphosphate = 5-phospho-alpha-D-ribose 1-diphosphate + adenine. It participates in purine metabolism; AMP biosynthesis via salvage pathway; AMP from adenine: step 1/1. Catalyzes a salvage reaction resulting in the formation of AMP, that is energically less costly than de novo synthesis. This Frankia alni (strain DSM 45986 / CECT 9034 / ACN14a) protein is Adenine phosphoribosyltransferase.